The sequence spans 141 residues: Nucleoside diphosphate kinase (141 aa).

Lys11, Phe59, Arg87, Thr93, Arg104, and Asn114 together coordinate ATP. Catalysis depends on His117, which acts as the Pros-phosphohistidine intermediate.

The protein belongs to the NDK family. In terms of assembly, homotetramer. Mg(2+) serves as cofactor.

It localises to the cytoplasm. It carries out the reaction a 2'-deoxyribonucleoside 5'-diphosphate + ATP = a 2'-deoxyribonucleoside 5'-triphosphate + ADP. The enzyme catalyses a ribonucleoside 5'-diphosphate + ATP = a ribonucleoside 5'-triphosphate + ADP. Its function is as follows. Major role in the synthesis of nucleoside triphosphates other than ATP. The ATP gamma phosphate is transferred to the NDP beta phosphate via a ping-pong mechanism, using a phosphorylated active-site intermediate. This is Nucleoside diphosphate kinase from Paracidovorax citrulli (strain AAC00-1) (Acidovorax citrulli).